A 342-amino-acid chain; its full sequence is Methionyl-tRNA formyltransferase (342 aa).

A (6S)-5,6,7,8-tetrahydrofolate-binding site is contributed by 108–111; it reads SLLP.

The protein belongs to the Fmt family.

It catalyses the reaction L-methionyl-tRNA(fMet) + (6R)-10-formyltetrahydrofolate = N-formyl-L-methionyl-tRNA(fMet) + (6S)-5,6,7,8-tetrahydrofolate + H(+). Functionally, attaches a formyl group to the free amino group of methionyl-tRNA(fMet). The formyl group appears to play a dual role in the initiator identity of N-formylmethionyl-tRNA by promoting its recognition by IF2 and preventing the misappropriation of this tRNA by the elongation apparatus. The sequence is that of Methionyl-tRNA formyltransferase from Prochlorococcus marinus (strain MIT 9303).